The following is a 793-amino-acid chain: Phenylalanine--tRNA ligase beta subunit (793 aa).

The 116-residue stretch at Thr-39–Cys-154 folds into the tRNA-binding domain. Positions Pro-403–Ala-481 constitute a B5 domain. Mg(2+)-binding residues include Asp-457, Asp-463, Glu-466, and Glu-467. The FDX-ACB domain occupies Pro-697 to Asp-793.

The protein belongs to the phenylalanyl-tRNA synthetase beta subunit family. Type 1 subfamily. As to quaternary structure, tetramer of two alpha and two beta subunits. The cofactor is Mg(2+).

It is found in the cytoplasm. The enzyme catalyses tRNA(Phe) + L-phenylalanine + ATP = L-phenylalanyl-tRNA(Phe) + AMP + diphosphate + H(+). The polypeptide is Phenylalanine--tRNA ligase beta subunit (Chlamydia caviae (strain ATCC VR-813 / DSM 19441 / 03DC25 / GPIC) (Chlamydophila caviae)).